The chain runs to 272 residues: Heat stress transcription factor A-7a (272 aa).

Positions 1–26 are disordered; sequence MMNPFLPEGCDPPPPPQPMEGLHENA. A DNA-binding region spans residues 27 to 121; it reads PPPFLTKTFE…LLKNIKRRNP (95 aa). The tract at residues 132-186 is hydrophobic repeat HR-A/B; the sequence is ACNELRREKQVLMMEIVSLRQQQQTTKSYIKAMEQRIEGTERKQRQMMSFLARAM. The Bipartite nuclear localization signal signature appears at 201 to 216; the sequence is KKIKELEDNESAKRKR. The span at 203 to 212 shows a compositional bias: basic and acidic residues; sequence IKELEDNESA. The segment at 203–223 is disordered; sequence IKELEDNESAKRKRGSSSMSE. An AHA motif is present at residues 256 to 265; it reads DGFWEELLSD.

This sequence belongs to the HSF family. Class A subfamily. In terms of assembly, homotrimer. In terms of processing, exhibits temperature-dependent phosphorylation.

It is found in the nucleus. Transcriptional activator that specifically binds DNA sequence 5'-AGAAnnTTCT-3' known as heat shock promoter elements (HSE). The chain is Heat stress transcription factor A-7a (HSFA7A) from Arabidopsis thaliana (Mouse-ear cress).